A 329-amino-acid chain; its full sequence is Probable nicotianamine synthase 7 (329 aa).

Belongs to the nicotianamine synthase (NAS)-like family.

The enzyme catalyses 3 S-adenosyl-L-methionine = nicotianamine + 3 S-methyl-5'-thioadenosine + 3 H(+). Functionally, synthesizes nicotianamine, a polyamine that is the first intermediate in the synthesis of the phytosiderophores of the mugineic acid type found in gramineae which serves as a sensor for the physiological iron status within the plant, and/or might be involved in the transport of iron. The polypeptide is Probable nicotianamine synthase 7 (NAS7) (Hordeum vulgare (Barley)).